The following is a 237-amino-acid chain: tRNA1(Val) (adenine(37)-N6)-methyltransferase (237 aa).

Belongs to the methyltransferase superfamily. tRNA (adenine-N(6)-)-methyltransferase family.

The protein resides in the cytoplasm. It carries out the reaction adenosine(37) in tRNA1(Val) + S-adenosyl-L-methionine = N(6)-methyladenosine(37) in tRNA1(Val) + S-adenosyl-L-homocysteine + H(+). Its function is as follows. Specifically methylates the adenine in position 37 of tRNA(1)(Val) (anticodon cmo5UAC). The protein is tRNA1(Val) (adenine(37)-N6)-methyltransferase of Parabacteroides distasonis (strain ATCC 8503 / DSM 20701 / CIP 104284 / JCM 5825 / NCTC 11152).